The primary structure comprises 534 residues: Peptide chain release factor 3 (534 aa).

In terms of domain architecture, tr-type G spans Ser9–Gln278. GTP-binding positions include Ser18 to Thr25, Asp86 to His90, and Asn140 to Asp143.

Belongs to the TRAFAC class translation factor GTPase superfamily. Classic translation factor GTPase family. PrfC subfamily.

It localises to the cytoplasm. Increases the formation of ribosomal termination complexes and stimulates activities of RF-1 and RF-2. It binds guanine nucleotides and has strong preference for UGA stop codons. It may interact directly with the ribosome. The stimulation of RF-1 and RF-2 is significantly reduced by GTP and GDP, but not by GMP. This chain is Peptide chain release factor 3, found in Stenotrophomonas maltophilia (strain R551-3).